Here is an 870-residue protein sequence, read N- to C-terminus: Importin subunit beta-1 (870 aa).

Position 2 is an N-acetylalanine (alanine 2). HEAT repeat units lie at residues 4–33 (EVTQ…FQEQ), 35–67 (LAGF…KNAL), 87–126 (MSTK…ELPQ), 132–161 (LIVS…LCEE), 172–204 (VNKI…YMAL), 214–249 (DMER…IAST), 255–304 (AHYM…EFAG), 313–361 (FTKQ…RAVG), 365–395 (VPHV…GSIL), 403–440 (LMAI…IFEF), 456–492 (CQQI…EDIG), 498–535 (TPFF…EVVR), 542–588 (STMV…QVII), 596–637 (TKSK…AYAA), 642–679 (AKYM…CRAL), 684–722 (LPYC…ALAI), 730–776 (WRYS…FQGF), and 826–868 (SHVG…TRAI). The 81-residue stretch at 23–103 (AEESLKQFQE…RAFLLKTLSA (81 aa)) folds into the Importin N-terminal domain.

The protein belongs to the importin beta family. Importin beta-1 subfamily. Forms a complex with the importin subunits alpha IMPA1 or IMPA2, the nucleoporin NUP62 and the Ran-GTP-binding proteins RAN1, RAN2 or RAN3. In terms of tissue distribution, expressed in roots, cotyledons, leaves, stems, petals, stamen, stigma, siliques, embryos and guard cells.

The protein resides in the cytoplasm. It is found in the nucleus. In terms of biological role, acts as a negative effector of drought tolerance. Involved in the regulation of stomatal closure and in the abscisic acid (ABA)-mediated pathway that lead to drought tolerance. Does not directly mediate nuclear import of ABI1 and ABI2 which are key regulators of the ABA signaling pathway. May be involved in nuclear translocation of other type 2C protein phosphatases that mediate ABA signaling. The chain is Importin subunit beta-1 from Arabidopsis thaliana (Mouse-ear cress).